Here is a 64-residue protein sequence, read N- to C-terminus: Large ribosomal subunit protein bL28 (64 aa).

Belongs to the bacterial ribosomal protein bL28 family.

This Campylobacter jejuni subsp. jejuni serotype O:6 (strain 81116 / NCTC 11828) protein is Large ribosomal subunit protein bL28.